The sequence spans 373 residues: Nuclear hormone receptor family member nhr-69 (373 aa).

The nuclear receptor DNA-binding region spans 3 to 78; it reads EEICHICNDK…AGMKSNAIQN (76 aa). NR C4-type zinc fingers lie at residues 6–26 and 42–66; these read CHIC…CDGC and CRFE…LQKC. The NR LBD domain maps to 93–344; it reads EKEDLIDQLV…SLMEELILND (252 aa).

This sequence belongs to the nuclear hormone receptor family. Interacts with R-SMAD daf-8. In terms of tissue distribution, expressed in the ASI neurons, hypodermis, and in tail neurons.

The protein resides in the nucleus. Functionally, orphan nuclear receptor which, in cooperation with R-SMAD daf-8, modulates the Insulin/IGF-1-like signaling (IIS) pathway, perhaps by regulating expression of the potassium channel exp-2, which in turn modulates the secretion of insulin-like peptide daf-28. This Caenorhabditis elegans protein is Nuclear hormone receptor family member nhr-69 (nhr-69).